The primary structure comprises 78 residues: Small ribosomal subunit protein bS18c (78 aa).

The protein belongs to the bacterial ribosomal protein bS18 family. In terms of assembly, part of the 30S ribosomal subunit.

The protein resides in the plastid. The protein localises to the chloroplast. The polypeptide is Small ribosomal subunit protein bS18c (Oltmannsiellopsis viridis (Marine flagellate)).